We begin with the raw amino-acid sequence, 225 residues long: Uracil-DNA glycosylase (225 aa).

D65 serves as the catalytic Proton acceptor.

It belongs to the uracil-DNA glycosylase (UDG) superfamily. UNG family.

It localises to the cytoplasm. The enzyme catalyses Hydrolyzes single-stranded DNA or mismatched double-stranded DNA and polynucleotides, releasing free uracil.. Excises uracil residues from the DNA which can arise as a result of misincorporation of dUMP residues by DNA polymerase or due to deamination of cytosine. In Bacillus cereus (strain G9842), this protein is Uracil-DNA glycosylase.